The sequence spans 217 residues: Non-structural protein NS3 (217 aa).

Belongs to the orbivirus NS3 family.

Its function is as follows. May play a role in the release of virions from infected cells. This Camelus dromedarius (Dromedary) protein is Non-structural protein NS3 (Segment-10).